The primary structure comprises 179 residues: Replicase large subunit (179 aa).

The protein belongs to the ssRNA positive-strand viruses RNA-directed RNA polymerase family.

The catalysed reaction is RNA(n) + a ribonucleoside 5'-triphosphate = RNA(n+1) + diphosphate. It carries out the reaction ATP + H2O = ADP + phosphate + H(+). Replicase large subunit: is an RNA-dependent RNA polymerase active in viral RNA replication. In Tobacco rattle virus (strain PSG), this protein is Replicase large subunit.